Consider the following 477-residue polypeptide: Probable cytosolic Fe-S cluster assembly factor GM20417 (477 aa).

Residues Cys23, Cys68, Cys71, Cys74, Cys187, Cys243, Cys395, and Cys399 each contribute to the [4Fe-4S] cluster site.

It belongs to the NARF family.

Its function is as follows. Component of the cytosolic iron-sulfur (Fe/S) protein assembly machinery. Required for maturation of extramitochondrial Fe/S proteins. The protein is Probable cytosolic Fe-S cluster assembly factor GM20417 of Drosophila sechellia (Fruit fly).